The primary structure comprises 57 residues: Putative antitoxin VapB4 (57 aa).

In terms of biological role, possibly the antitoxin component of a type II toxin-antitoxin (TA) system. Its cognate toxin is VapC4 (Potential). The sequence is that of Putative antitoxin VapB4 (vapB4) from Methanocaldococcus jannaschii (strain ATCC 43067 / DSM 2661 / JAL-1 / JCM 10045 / NBRC 100440) (Methanococcus jannaschii).